A 335-amino-acid polypeptide reads, in one-letter code: 2-acylglycerol O-acyltransferase 1 (335 aa).

Transmembrane regions (helical) follow at residues 24–44 and 104–124; these read WLLSFLLFAQVCLGIIVFLII and YIFGFHPHGVLVVGAFGNFCT. Asparagine 125 and asparagine 180 each carry an N-linked (GlcNAc...) asparagine glycan.

This sequence belongs to the diacylglycerol acyltransferase family.

Its subcellular location is the endoplasmic reticulum membrane. It catalyses the reaction a 2-acylglycerol + an acyl-CoA = a 1,2-diacylglycerol + CoA. The enzyme catalyses 2-(9Z-octadecenoyl)-glycerol + butanoyl-CoA = 1-butanoyl-2-(9Z-octadecenoyl)-glycerol + CoA. The catalysed reaction is 2-(9Z-octadecenoyl)-glycerol + octanoyl-CoA = 1-octanoyl-2-(9Z-octadecenoyl)-glycerol + CoA. It carries out the reaction 2-(9Z-octadecenoyl)-glycerol + dodecanoyl-CoA = 1-dodecanoyl-2-(9Z-octadecenoyl)-glycerol + CoA. It catalyses the reaction 2-(9Z-octadecenoyl)-glycerol + tetradecanoyl-CoA = 1-tetradecanoyl-2-(9Z-octadecenoyl)-glycerol + CoA. The enzyme catalyses 2-(9Z-octadecenoyl)-glycerol + hexadecanoyl-CoA = 1-hexadecanoyl-2-(9Z-octadecenoyl)-glycerol + CoA. The catalysed reaction is 2-(9Z-octadecenoyl)-glycerol + octadecanoyl-CoA = 1-octadecanoyl-2-(9Z-octadecenoyl)-glycerol + CoA. It carries out the reaction eicosanoyl-CoA + 2-(9Z-octadecenoyl)-glycerol = 1-eicosanoyl-2-(9Z-octadecenoyl)-glycerol + CoA. It catalyses the reaction 2-(9Z-octadecenoyl)-glycerol + (9Z)-octadecenoyl-CoA = 1,2-di-(9Z-octadecenoyl)-glycerol + CoA. The enzyme catalyses 2-(9Z-octadecenoyl)-glycerol + (9Z,12Z)-octadecadienoyl-CoA = 1-(9Z,12Z-octadecadienoyl)-2-(9Z-octadecenoyl)-glycerol + CoA. The catalysed reaction is 2-(9Z-octadecenoyl)-glycerol + (5Z,8Z,11Z,14Z)-eicosatetraenoyl-CoA = 1-(5Z,8Z,11Z,14Z-eicosatetraenoyl)-2-(9Z-octadecenoyl)-glycerol + CoA. It carries out the reaction a 2-acylglycerol + an acyl-CoA = a 1,2-diacyl-sn-glycerol + CoA. It catalyses the reaction a 2-acylglycerol + an acyl-CoA = a 2,3-diacyl-sn-glycerol + CoA. The enzyme catalyses a 1-acylglycerol + an acyl-CoA = a 1,2-diacylglycerol + CoA. The catalysed reaction is 1-dodecanoylglycerol + (9Z)-octadecenoyl-CoA = 1-dodecanoyl-2-(9Z-octadecenoyl)-glycerol + CoA. It carries out the reaction 1-tetradecanoylglycerol + (9Z)-octadecenoyl-CoA = 1-tetradecanoyl-2-(9Z-octadecenoyl)-glycerol + CoA. It catalyses the reaction 1-hexadecanoylglycerol + (9Z)-octadecenoyl-CoA = 1-hexadecanoyl-2-(9Z-octadecenoyl)-glycerol + CoA. The enzyme catalyses 1-(9Z-octadecenoyl)-glycerol + (9Z)-octadecenoyl-CoA = 1,2-di-(9Z-octadecenoyl)-glycerol + CoA. The catalysed reaction is 1-(9Z,12Z-octadecadienoyl)-glycerol + (9Z)-octadecenoyl-CoA = 1-(9Z,12Z-octadecadienoyl)-2-(9Z-octadecenoyl)-glycerol + CoA. It carries out the reaction 1-(9Z,12Z,15Z-octadecatrienoyl)-glycerol + (9Z)-octadecenoyl-CoA = 1-(9Z,12Z,15Z-octadecatrienoyl)-2-(9Z-octadecenoyl)-glycerol + CoA. It catalyses the reaction 1-(5Z,8Z,11Z,14Z-eicosatetraenoyl)-glycerol + (9Z)-octadecenoyl-CoA = 1-(5Z,8Z,11Z,14Z-eicosatetraenoyl)-2-(9Z-octadecenoyl)-glycerol + CoA. The enzyme catalyses a 1-acylglycerol + an acyl-CoA = a 1,3-diacylglycerol + CoA. The catalysed reaction is 1-dodecanoylglycerol + (9Z)-octadecenoyl-CoA = 1-dodecanoyl-3-(9Z-octadecenoyl)-glycerol + CoA. It carries out the reaction 1-hexadecanoylglycerol + (9Z)-octadecenoyl-CoA = 1-(9Z-octadecenoyl)-3-hexadecanoylglycerol + CoA. It catalyses the reaction 1-octadecanoylglycerol + (9Z)-octadecenoyl-CoA = 1-octadecanoyl-3-(9Z-octadecenoyl)-glycerol + CoA. The enzyme catalyses 1-(9Z-octadecenoyl)-sn-glycerol + (9Z)-octadecenoyl-CoA = 1,3-di-(9Z-octadecenoyl)-glycerol + CoA. The catalysed reaction is 1-(9Z,12Z-octadecadienoyl)-glycerol + (9Z)-octadecenoyl-CoA = 1-(9Z-octadecenoyl)-3-(9Z,12Z-octadecadienoyl)-glycerol + CoA. It carries out the reaction 1-(9Z,12Z,15Z-octadecatrienoyl)-glycerol + (9Z)-octadecenoyl-CoA = 1-(9Z,12Z,15Z-octadecatrienoyl)-3-(9Z-octadecenoyl)-glycerol + CoA. It catalyses the reaction a 1-acyl-sn-glycerol + an acyl-CoA = a 1,3-diacyl-sn-glycerol + CoA. The enzyme catalyses a 3-acyl-sn-glycerol + an acyl-CoA = a 1,3-diacyl-sn-glycerol + CoA. The catalysed reaction is 3-octadecanoyl-sn-glycerol + (9Z)-octadecenoyl-CoA = 1-(9Z-octadecenoyl)-3-octadecanoyl-sn-glycerol + CoA. It functions in the pathway glycerolipid metabolism; triacylglycerol biosynthesis. Its function is as follows. Involved in glycerolipid synthesis and lipid metabolism. Catalyzes the formation of diacylglycerol, the precursor of triacylglycerol, by transferring the acyl chain of a fatty acyl-CoA to a monoacylglycerol, mainly at the sn-1 or sn-3 positions. It uses both sn-2-monoacylglycerol (2-acylglycerol) and sn-1-monoacylglycerol (1-acyl-sn-glycerol) equally well as substrates, and uses sn-3-monoacylglycerol (3-acyl-sn-glycerol) with lower efficiency. Probably not involved in absorption of dietary fat in the small intestine. This is 2-acylglycerol O-acyltransferase 1 (MOGAT1) from Bos taurus (Bovine).